The sequence spans 134 residues: Large ribosomal subunit protein uL22 (134 aa).

Belongs to the universal ribosomal protein uL22 family. Part of the 50S ribosomal subunit.

This protein binds specifically to 23S rRNA; its binding is stimulated by other ribosomal proteins, e.g. L4, L17, and L20. It is important during the early stages of 50S assembly. It makes multiple contacts with different domains of the 23S rRNA in the assembled 50S subunit and ribosome. Functionally, the globular domain of the protein is located near the polypeptide exit tunnel on the outside of the subunit, while an extended beta-hairpin is found that lines the wall of the exit tunnel in the center of the 70S ribosome. The sequence is that of Large ribosomal subunit protein uL22 from Gluconacetobacter diazotrophicus (strain ATCC 49037 / DSM 5601 / CCUG 37298 / CIP 103539 / LMG 7603 / PAl5).